Here is a 78-residue protein sequence, read N- to C-terminus: Large ribosomal subunit protein bL28 (78 aa).

It belongs to the bacterial ribosomal protein bL28 family.

This chain is Large ribosomal subunit protein bL28, found in Acinetobacter baylyi (strain ATCC 33305 / BD413 / ADP1).